Reading from the N-terminus, the 435-residue chain is MTTNEEFIRTQIFGTVFEITNRYNDLNPVGMGAFGLVCSATDTLTSQPVAIKKIMKPFSTAVLAKRTYRELKLLKHLRHENLICLQDIFLSPLEDIYFVTELQGTDLHRLLQTRPLEKQFVQYFLYQILRGLKYVHSAGVIHRDLKPSNILINENCDLKICDFGLARIQDPQMTGYVSTRYYRAPEIMLTWQKYDVEVDIWSAGCIFAEMIEGKPLFPGKDHVHQFSIITDLLGSPPKDVINTICSENTLKFVTSLPHRDPIPFSERFKTVEPDAVDLLEKMLVFDPKKRITAADALAHPYSAPYHDPTDEPVADAKFDWHFNDADLPVDTWRVMMYSEILDFHKIGGSDGQIDISATFDDQVAAATAAAAQAQAQAQAQVQLNMAAHSHNGAGTTGNDHSDIAGGNKVSDHVAANDTITDYGNQAIQYANEFQQ.

An N-acetylthreonine modification is found at T2. The region spanning 23-302 is the Protein kinase domain; the sequence is YNDLNPVGMG…AADALAHPYS (280 aa). ATP contacts are provided by residues 29 to 37 and K52; that span reads VGMGAFGLV. Residue D144 is the Proton acceptor of the active site. 2 residues coordinate arsenite: C156 and C161. T174 carries the post-translational modification Phosphothreonine; by PBS2. A TXY motif is present at residues 174–176; sequence TGY. Y176 is modified (phosphotyrosine; by PBS2). Residue C205 coordinates arsenite.

It belongs to the protein kinase superfamily. Ser/Thr protein kinase family. MAP kinase subfamily. HOG1 sub-subfamily. Interacts with CDC37, HOT1, KIN28, PTP2, PTP3, RBP1, RCK2, RPD3, SIC1, SMP1 and SIN4. Requires Mg(2+) as cofactor. Post-translationally, activated by PBS2-mediated concomitant phosphorylation at Thr-174 and Tyr-176. In terms of processing, dually phosphorylated on Thr-174 and Tyr-176, which activates the enzyme.

Its subcellular location is the cytoplasm. The protein resides in the nucleus. The enzyme catalyses L-seryl-[protein] + ATP = O-phospho-L-seryl-[protein] + ADP + H(+). The catalysed reaction is L-threonyl-[protein] + ATP = O-phospho-L-threonyl-[protein] + ADP + H(+). With respect to regulation, activated by tyrosine and threonine phosphorylation. Inactivated by dephosphorylation via recruitment of PTC1 to the PBS2-HOG1 complex after adaptation to osmotic stress. PTP2 and PTP3 inactivate HOG1 by dephosphorylating Tyr-176, while the PP2Cs PTC1 and PTC2 or PTC3 dephosphorylate Thr-174 in the activation loop. Its function is as follows. Proline-directed serine/threonine-protein kinase involved in a signal transduction pathway that is activated by changes in the osmolarity of the extracellular environment. Controls osmotic regulation of transcription via the stress response element (STRE) in promoters of target genes. Upon osmotic shock, associates with the SKO1-SSN6-TUP1 complex, phosphorylates SKO1, and converts it into an activator that subsequently recruits Swi/Snf and SAGA complexes. Activates the SMP1 transcription factor and the RCK2 kinase, both also involved in the regulation of the expression of a subset of osmotic stress-related genes. Phosphorylation of HSL1 by HOG1 leads to a G2 arrest essential for cell survival at high osmolarity. Also mediates cell-cycle arrest in G1 phase by the dual targeting of SIC1. Phosphorylates methyltransferase DOT1 at least on 'Ser-565' and 'Thr-576'. Regulates MFA2 ARE-mediated translation in response to carbon source. Targets RPD3 histone deacetylase to osmoresponsive promoters to induce gene expression on stress. Required for the Golgi apparatus localization of MNN1. Plays an essential role in maintaining water homeostasis, arsenite detoxification, copper-resistance, cold-resistance, hydrogen peroxide response, adaptation to citric acid stress, and repression of the mating pathway activity. Functions as an arsenic sensor and effector via direct binding to arsenic and subsequent phosphorylation of the ARR1 transcription factor. In Saccharomyces cerevisiae (strain ATCC 204508 / S288c) (Baker's yeast), this protein is Mitogen-activated protein kinase HOG1 (HOG1).